A 329-amino-acid chain; its full sequence is DNA-directed RNA polymerase subunit alpha (329 aa).

An alpha N-terminal domain (alpha-NTD) region spans residues 1–235 (MQGSVTEFLK…EQLDAFVDLR (235 aa)). Residues 249–329 (FDPILLRPVD…NWPPASIAED (81 aa)) are alpha C-terminal domain (alpha-CTD).

Belongs to the RNA polymerase alpha chain family. As to quaternary structure, homodimer. The RNAP catalytic core consists of 2 alpha, 1 beta, 1 beta' and 1 omega subunit. When a sigma factor is associated with the core the holoenzyme is formed, which can initiate transcription.

It catalyses the reaction RNA(n) + a ribonucleoside 5'-triphosphate = RNA(n+1) + diphosphate. DNA-dependent RNA polymerase catalyzes the transcription of DNA into RNA using the four ribonucleoside triphosphates as substrates. This chain is DNA-directed RNA polymerase subunit alpha, found in Pasteurella multocida (strain Pm70).